The chain runs to 553 residues: Glycerol kinase 2 (553 aa).

Substrate is bound at residue threonine 20. Arginine 24 contributes to the ATP binding site. Residues arginine 94, tyrosine 148, and aspartate 259 each contribute to the substrate site. ATP contacts are provided by residues threonine 281, glycine 326, and 427–431 (GMTNN). Residues 526-546 (IFSSLPLGFFIVSSMVMLIGA) form a helical membrane-spanning segment.

The protein belongs to the FGGY kinase family. As to quaternary structure, interacts with ARMC12. Interacts with PLD6. As to expression, testis-specific. Expressed in the midpiece of spermatozoa.

The protein localises to the mitochondrion outer membrane. It localises to the cytoplasm. It carries out the reaction glycerol + ATP = sn-glycerol 3-phosphate + ADP + H(+). It participates in polyol metabolism; glycerol degradation via glycerol kinase pathway; sn-glycerol 3-phosphate from glycerol: step 1/1. Its function is as follows. Key enzyme in the regulation of glycerol uptake and metabolism. Essential for male fertility and sperm mitochondrial sheath formation. Required for proper arrangement of crescent-like mitochondria to form the mitochondrial sheath during spermatogenesis. Can induce mitochondrial clustering through interactions with PLD6 and up-regulation of phosphatidic acid synthesis in the mitochondria. The sequence is that of Glycerol kinase 2 (GK2) from Homo sapiens (Human).